The sequence spans 374 residues: Peptide chain release factor 2 (374 aa).

Glutamine 252 bears the N5-methylglutamine mark.

This sequence belongs to the prokaryotic/mitochondrial release factor family. Methylated by PrmC. Methylation increases the termination efficiency of RF2.

The protein localises to the cytoplasm. In terms of biological role, peptide chain release factor 2 directs the termination of translation in response to the peptide chain termination codons UGA and UAA. The sequence is that of Peptide chain release factor 2 from Xanthomonas euvesicatoria pv. vesicatoria (strain 85-10) (Xanthomonas campestris pv. vesicatoria).